The chain runs to 833 residues: Protein MCM10 homolog (833 aa).

The segment at Met1–Leu122 is N-terminal domain. Residues Glu18 to Val64 show a composition bias toward acidic residues. The segment at Glu18–Pro208 is disordered. Positions Ser70–Ala108 form a coiled coil. Over residues Asn75–Gln93 the composition is skewed to basic and acidic residues. Polar residues-rich tracts occupy residues Gln115–Gln126 and Ser165–Gln179. The OB-fold domain stretch occupies residues Thr202–Thr360. A zinc finger-like 1 region spans residues Cys361–His386. Composition is skewed to low complexity over residues Ser502–Ser516 and Ser571–Gly583. The disordered stretch occupies residues Ser502–Leu589. 2 zinc finger-like regions span residues Cys741 to His760 and Cys774 to Cys794.

It belongs to the MCM10 family. Self-associates.

The protein resides in the nucleus. Its function is as follows. Acts as a replication initiation factor that brings together the MCM2-7 helicase and the DNA polymerase alpha/primase complex in order to initiate DNA replication. Additionally, plays a role in preventing DNA damage during replication. In Danio rerio (Zebrafish), this protein is Protein MCM10 homolog (mcm10).